The sequence spans 321 residues: PIH1 domain-containing protein 2 (321 aa).

It belongs to the PIH1 family.

The protein is PIH1 domain-containing protein 2 (pih1d2) of Xenopus tropicalis (Western clawed frog).